Here is a 155-residue protein sequence, read N- to C-terminus: Peptide methionine sulfoxide reductase MsrB (155 aa).

Residues 15-137 (REALIATLNA…NSVSLTFIPT (123 aa)) enclose the MsrB domain. 4 residues coordinate Zn(2+): Cys-54, Cys-57, Cys-103, and Cys-106. The active-site Nucleophile is the Cys-126.

The protein belongs to the MsrB Met sulfoxide reductase family. The cofactor is Zn(2+).

The enzyme catalyses L-methionyl-[protein] + [thioredoxin]-disulfide + H2O = L-methionyl-(R)-S-oxide-[protein] + [thioredoxin]-dithiol. In Xylella fastidiosa (strain 9a5c), this protein is Peptide methionine sulfoxide reductase MsrB.